A 113-amino-acid polypeptide reads, in one-letter code: Large ribosomal subunit protein bL17 (113 aa).

It belongs to the bacterial ribosomal protein bL17 family. Part of the 50S ribosomal subunit. Contacts protein L32.

This Clostridioides difficile (strain 630) (Peptoclostridium difficile) protein is Large ribosomal subunit protein bL17.